We begin with the raw amino-acid sequence, 128 residues long: Iron-sulfur cluster insertion protein ErpA (128 aa).

Residues cysteine 56, cysteine 120, and cysteine 122 each contribute to the iron-sulfur cluster site.

It belongs to the HesB/IscA family. Homodimer. Iron-sulfur cluster is required as a cofactor.

Functionally, required for insertion of 4Fe-4S clusters for at least IspG. The chain is Iron-sulfur cluster insertion protein ErpA from Xanthomonas euvesicatoria pv. vesicatoria (strain 85-10) (Xanthomonas campestris pv. vesicatoria).